The chain runs to 242 residues: Small ribosomal subunit protein uS2 (242 aa).

Belongs to the universal ribosomal protein uS2 family.

In Shewanella oneidensis (strain ATCC 700550 / JCM 31522 / CIP 106686 / LMG 19005 / NCIMB 14063 / MR-1), this protein is Small ribosomal subunit protein uS2.